Consider the following 422-residue polypeptide: Acetyl-CoA acetyltransferase, mitochondrial (422 aa).

A mitochondrion-targeting transit peptide spans 1–28 (MPVLAALLRRGPLLQRRVQEIRYAERSY). Lysine 61 carries the post-translational modification N6-acetyllysine; alternate. Position 61 is an N6-succinyllysine; alternate (lysine 61). At lysine 73 the chain carries N6-succinyllysine. The active-site Acyl-thioester intermediate is the cysteine 121. An N6-acetyllysine; alternate mark is found at lysine 169, lysine 176, lysine 185, and lysine 197. N6-succinyllysine; alternate is present on residues lysine 169, lysine 176, lysine 185, and lysine 197. Residue tyrosine 214 participates in CoA binding. Tyrosine 214 is a binding site for K(+). Lysine 218 is subject to N6-acetyllysine; alternate. Residue lysine 218 is modified to N6-succinyllysine; alternate. Position 238 is an N6-succinyllysine (lysine 238). The residue at position 240 (lysine 240) is an N6-acetyllysine; alternate. Lysine 240 carries the N6-succinyllysine; alternate modification. N6-acetyllysine is present on residues lysine 246 and lysine 252. CoA is bound by residues 253–255 (RVD) and lysine 258. Lysine 258 carries the N6-acetyllysine; alternate modification. Residue lysine 258 is modified to N6-succinyllysine; alternate. N6-succinyllysine occurs at positions 261 and 263. Positions 275, 276, and 278 each coordinate K(+). Residue serine 279 coordinates CoA. At lysine 333 the chain carries N6-acetyllysine. Residue valine 376 coordinates K(+). Cysteine 408 (proton donor/acceptor) is an active-site residue.

Belongs to the thiolase-like superfamily. Thiolase family. Homotetramer. In terms of processing, succinylation at Lys-263, adjacent to a coenzyme A binding site. Desuccinylated by SIRT5.

It localises to the mitochondrion. The enzyme catalyses 2 acetyl-CoA = acetoacetyl-CoA + CoA. The catalysed reaction is propanoyl-CoA + acetyl-CoA = 2-methyl-3-oxobutanoyl-CoA + CoA. It functions in the pathway lipid metabolism; fatty acid beta-oxidation. Activated by potassium ions, but not sodium ions. In terms of biological role, this is one of the enzymes that catalyzes the last step of the mitochondrial beta-oxidation pathway, an aerobic process breaking down fatty acids into acetyl-CoA. Using free coenzyme A/CoA, catalyzes the thiolytic cleavage of medium- to long-chain 3-oxoacyl-CoAs into acetyl-CoA and a fatty acyl-CoA shortened by two carbon atoms. The activity of the enzyme is reversible and it can also catalyze the condensation of two acetyl-CoA molecules into acetoacetyl-CoA. Thereby, it plays a major role in ketone body metabolism. The protein is Acetyl-CoA acetyltransferase, mitochondrial (ACAT1) of Bos taurus (Bovine).